Here is a 429-residue protein sequence, read N- to C-terminus: MLVVKKTPYIKGILSAPPSKSYTHRAVICASLANGLSNLKNPLNGADCLSSAHACEMFGAEIGLGNEKWIVMGSELKTPDNIVDIGNSGTTLRILTGISSQISNGYTVLTGDDSIRKRPMQPLLDALKQLGLICFSTKNNGTAPIVVKSGKISSNVVEIRGDMSSQFITSLMMTLPFSEDDSEIILTTPLKSEPYLNITIDVLDKFGVKIGKIEEKNKSGYKIKGNQTYKPCDYTIEGDYSSASYLVAAGVLLNSDIVIKNVFKDSKQGDREIIEIVKKMGADVEINDDNVKITGPYELNGIEIDVTDIPDLVPTIAVLGCFAKGKTVVYNGEHVRLKECDRLAACTAELSKMGARIEEKKDGLIITGVHKLNGAKLKTYHDHRLVMAFTIAGMLADGETIIEGEDSVKISFPDFVDKMKSIGSNIKVI.

The 3-phosphoshikimate site is built by K20, S21, and R25. K20 is a phosphoenolpyruvate binding site. Residues G89 and R118 each contribute to the phosphoenolpyruvate site. Positions 164, 165, 166, 192, 311, and 338 each coordinate 3-phosphoshikimate. Q166 contacts phosphoenolpyruvate. The Proton acceptor role is filled by D311. R342 and R384 together coordinate phosphoenolpyruvate.

This sequence belongs to the EPSP synthase family. In terms of assembly, monomer.

It is found in the cytoplasm. It carries out the reaction 3-phosphoshikimate + phosphoenolpyruvate = 5-O-(1-carboxyvinyl)-3-phosphoshikimate + phosphate. The protein operates within metabolic intermediate biosynthesis; chorismate biosynthesis. Functionally, catalyzes the transfer of the enolpyruvyl moiety of phosphoenolpyruvate (PEP) to the 5-hydroxyl of shikimate-3-phosphate (S3P) to produce enolpyruvyl shikimate-3-phosphate and inorganic phosphate. This Methanococcus maripaludis (strain DSM 14266 / JCM 13030 / NBRC 101832 / S2 / LL) protein is 3-phosphoshikimate 1-carboxyvinyltransferase.